Here is a 224-residue protein sequence, read N- to C-terminus: Ribonuclease T (224 aa).

The segment covering 1–11 has biased composition (acidic residues); that stretch reads MSEDLYEDDQD. A disordered region spans residues 1 to 20; that stretch reads MSEDLYEDDQDSQVSSGSRH. Positions 32–206 constitute an Exonuclease domain; the sequence is VVVDVETGGF…YDTEKTAELF (175 aa). Mg(2+) is bound by residues Asp35, Glu37, His193, and Asp198. His193 serves as the catalytic Proton donor/acceptor.

It belongs to the RNase T family. Homodimer. Requires Mg(2+) as cofactor.

In terms of biological role, trims short 3' overhangs of a variety of RNA species, leaving a one or two nucleotide 3' overhang. Responsible for the end-turnover of tRNA: specifically removes the terminal AMP residue from uncharged tRNA (tRNA-C-C-A). Also appears to be involved in tRNA biosynthesis. The polypeptide is Ribonuclease T (Pseudomonas entomophila (strain L48)).